The following is a 118-amino-acid chain: MKLPQTMLRSISVKHVRWPRILTGSKLWYSTQMAMTPEEKMITDKLQQELEPEVCKVQDVSGGCGSMFAINITSKKFNGLSLIKQHQLVNRILRDDISRWHGLQLTTKKSTGKGPASS.

Belongs to the BolA/IbaG family. As to quaternary structure, interacts with NFU1.

The protein localises to the mitochondrion matrix. Functionally, acts as a mitochondrial iron-sulfur (Fe-S) cluster assembly factor that facilitates [4Fe-4S] cluster insertion into a subset of mitochondrial proteins such as lipoyl synthase (LS) and succinate dehydrogenase (SDH). Required during the last step of iron-sulfur protein assembly when the iron-sulfur cluster is inserted into the target protein. Acts together with NFU1, later than BOL1 and GRX5 in the [4Fe-4S] cluster insertion process. Not required for [2Fe-2S] cluster insertion into mitochondrial proteins. The polypeptide is BolA-like protein 3 (Saccharomyces cerevisiae (strain ATCC 204508 / S288c) (Baker's yeast)).